The chain runs to 248 residues: Ubiquinone/menaquinone biosynthesis C-methyltransferase UbiE (248 aa).

S-adenosyl-L-methionine-binding positions include threonine 71, aspartate 92, and 120 to 121 (DA).

This sequence belongs to the class I-like SAM-binding methyltransferase superfamily. MenG/UbiE family.

It catalyses the reaction a 2-demethylmenaquinol + S-adenosyl-L-methionine = a menaquinol + S-adenosyl-L-homocysteine + H(+). It carries out the reaction a 2-methoxy-6-(all-trans-polyprenyl)benzene-1,4-diol + S-adenosyl-L-methionine = a 5-methoxy-2-methyl-3-(all-trans-polyprenyl)benzene-1,4-diol + S-adenosyl-L-homocysteine + H(+). The protein operates within quinol/quinone metabolism; menaquinone biosynthesis; menaquinol from 1,4-dihydroxy-2-naphthoate: step 2/2. It participates in cofactor biosynthesis; ubiquinone biosynthesis. Functionally, methyltransferase required for the conversion of demethylmenaquinol (DMKH2) to menaquinol (MKH2) and the conversion of 2-polyprenyl-6-methoxy-1,4-benzoquinol (DDMQH2) to 2-polyprenyl-3-methyl-6-methoxy-1,4-benzoquinol (DMQH2). This is Ubiquinone/menaquinone biosynthesis C-methyltransferase UbiE from Methylococcus capsulatus (strain ATCC 33009 / NCIMB 11132 / Bath).